The primary structure comprises 520 residues: Probable E3 ubiquitin-protein ligase rbrA (520 aa).

Residues 1-42 show a composition bias toward acidic residues; it reads MTDDEMYEDYDVDDDSAEESGNESLDDTEYDDAATQEFDFDE. Residues 1–51 are disordered; sequence MTDDEMYEDYDVDDDSAEESGNESLDDTEYDDAATQEFDFDENQPQRSLGK. The tract at residues 135-354 is TRIAD supradomain; that stretch reads GNVSCLICLE…GGYYNCNKYD (220 aa). Residues Cys139, Cys142, Cys156, His158, Cys161, Cys164, Cys184, Cys189, Cys228, Cys233, Cys250, Cys252, Cys257, Cys260, His268, Cys273, Cys300, and Cys303 each contribute to the Zn(2+) site. The RING-type 1 zinc-finger motif lies at 139 to 189; sequence CLICLEDYPPTQTFALICNHRYCLPCYKNYLEIKVSEGPECIYTPCPAPKC. The IBR-type zinc finger occupies 208–273; sequence ERFNNFILKS…EIGDHMPCPC (66 aa). Residues 300–333 form an RING-type 2; atypical zinc finger; it reads CPECRSPIEKNGGCMHMTCRKNAGGCGFEFCWLC. Cys313 is an active-site residue. Residues Cys318, Cys325, Cys330, Cys333, His340, and Cys350 each contribute to the Zn(2+) site.

The protein belongs to the RBR family.

The catalysed reaction is [E2 ubiquitin-conjugating enzyme]-S-ubiquitinyl-L-cysteine + [acceptor protein]-L-lysine = [E2 ubiquitin-conjugating enzyme]-L-cysteine + [acceptor protein]-N(6)-ubiquitinyl-L-lysine.. The protein operates within protein modification; protein ubiquitination. Might act as an E3 ubiquitin-protein ligase. Appears to be required for normal cell-type proportioning and cell sorting during multicellular development. In addition to being necessary for a normal percentage of prestalk cells and the organization of the slug, rbrA is also necessary for spore cell viability. The polypeptide is Probable E3 ubiquitin-protein ligase rbrA (rbrA) (Dictyostelium discoideum (Social amoeba)).